The primary structure comprises 427 residues: Inward rectifier potassium channel 2 (427 aa).

Residues 1-81 (MGSVRTNRYS…IFTTCVDIRW (81 aa)) are Cytoplasmic-facing. Cys-76 is modified (S-nitrosocysteine). Residues 82-106 (RWMLVIFCLAFVLSWLFFGCVFWLI) form a helical membrane-spanning segment. The Extracellular portion of the chain corresponds to 107-128 (ALLHGDLDASRESKACVSEVNS). Residues 129-140 (FTAAFLFSIETQ) constitute an intramembrane region (helical; Pore-forming). The segment at residues 141–147 (TTIGYGF) is an intramembrane region (pore-forming). Residues 142–147 (TIGYGF) carry the Selectivity filter motif. Over 148–156 (RCVTDECPV) the chain is Extracellular. Residues 157 to 178 (AVFMVVFQSIVGCIIDAFIIGA) form a helical membrane-spanning segment. Residues 179-427 (VMAKMAKPKK…PRPLRRESEI (249 aa)) are Cytoplasmic-facing. The polyphosphoinositide (PIP2)-binding stretch occupies residues 181 to 208 (AKMAKPKKRNETLVFSHNAVIAMRDGKL). The interval 384 to 427 (SKEEDDSENGVPESTSTDTPPDIDLHNQASVPLEPRPLRRESEI) is disordered. The PDZ-binding signature appears at 425 to 427 (SEI).

The protein belongs to the inward rectifier-type potassium channel (TC 1.A.2.1) family. KCNJ2 subfamily. Homotetramer. Homomultimeric and heteromultimeric association with KCNJ4/Kir2.3. Can form heteromeric channels with Kir2.6/KCNJ18. Associates, via its PDZ-recognition domain, with a complex containing LIN7A, LIN7B, LIN7C, DLG1, CASK and APBA1. In terms of processing, S-nitrosylation increases the open probability and inward rectifying currents. Highly expressed in the ventricle and skeletal muscle, moderately in cerebrum and cerebellum. Only low levels are detected in kidney or lung.

The protein resides in the cell membrane. Its subcellular location is the sarcolemma. The protein localises to the T-tubule. It carries out the reaction K(+)(in) = K(+)(out). Its activity is regulated as follows. Activated by phosphatidylinositol 4,5 biphosphate (PtdIns(4,5)P2). Functionally, inward rectifier potassium channels are characterized by a greater tendency to allow potassium to flow into the cell rather than out of it. Their voltage dependence is regulated by the concentration of extracellular potassium; as external potassium is raised, the voltage range of the channel opening shifts to more positive voltages. The inward rectification is mainly due to the blockage of outward current by internal magnesium. Can be blocked by extracellular barium and cesium. Probably participates in establishing action potential waveform and excitability of neuronal and muscle tissues. This Oryctolagus cuniculus (Rabbit) protein is Inward rectifier potassium channel 2 (KCNJ2).